The chain runs to 64 residues: Large ribosomal subunit protein bL35 (64 aa).

The segment at 22 to 44 is disordered; the sequence is IMKQQAGMRHNLEVKSSKRKARL.

This sequence belongs to the bacterial ribosomal protein bL35 family.

The protein is Large ribosomal subunit protein bL35 of Clavibacter sepedonicus (Clavibacter michiganensis subsp. sepedonicus).